Consider the following 952-residue polypeptide: GATA zinc finger domain-containing protein 5 (952 aa).

2 disordered regions span residues 1–36 (MDYQ…DSPS) and 138–197 (PTPL…SPKQ). Over residues 10 to 24 (QISQEFPTDISTTKS) the composition is skewed to polar residues. Residues 148 to 157 (SPPPPPPPPA) are compositionally biased toward pro residues. Positions 158-196 (ATTTTTITTTTTTSAGNSTTKNNNNNNNNNNNNNGKSPK) are enriched in low complexity. The segment at 241 to 266 (CYQCNTSNTPEWRKGPEGPATLCNAC) adopts a GATA-type zinc-finger fold. Disordered stretches follow at residues 380–418 (MTPS…HEQP), 433–478 (LLSS…GGGG), 634–699 (QNNS…NKNN), and 732–816 (QQQE…LSVN). The segment covering 393 to 412 (KTTKTKPKPKSKSKPGKITH) has biased composition (basic residues). Positions 445-467 (SSSSSCGTSLNSSLGSSSGTITN) are enriched in low complexity. Positions 468–478 (SGGGSSGGGGG) are enriched in gly residues. Over residues 634–653 (QNNSFSGPNDQNPYVPSVSL) the composition is skewed to polar residues. 3 stretches are compositionally biased toward low complexity: residues 654 to 668 (NSNK…NNNK), 678 to 699 (NNKN…NKNN), and 732 to 745 (QQQE…EQQQ). Polar residues predominate over residues 746-762 (NLSINNSNQTNENEILG). The span at 763-814 (TTTTTTTSTATIITSQVPMNLSPNSDDNQSSSNYSTLSDSGSSPTDSFSGLS) shows a compositional bias: low complexity.

In Dictyostelium discoideum (Social amoeba), this protein is GATA zinc finger domain-containing protein 5 (gtaE).